Consider the following 183-residue polypeptide: Bifunctional protein PyrR (183 aa).

Residues 102-114 carry the PRPP-binding motif; it reads VVLVDDVLYTGRT.

This sequence belongs to the purine/pyrimidine phosphoribosyltransferase family. PyrR subfamily. As to quaternary structure, homodimer and homohexamer; in equilibrium.

The enzyme catalyses UMP + diphosphate = 5-phospho-alpha-D-ribose 1-diphosphate + uracil. In terms of biological role, regulates transcriptional attenuation of the pyrimidine nucleotide (pyr) operon by binding in a uridine-dependent manner to specific sites on pyr mRNA. This disrupts an antiterminator hairpin in the RNA and favors formation of a downstream transcription terminator, leading to a reduced expression of downstream genes. Functionally, also displays a weak uracil phosphoribosyltransferase activity which is not physiologically significant. The polypeptide is Bifunctional protein PyrR (Listeria monocytogenes serotype 4b (strain CLIP80459)).